The primary structure comprises 256 residues: 2-aminoethanethiol dioxygenase (256 aa).

Fe cation is bound by residues H100, H102, and H179.

As to quaternary structure, monomer. Fe cation serves as cofactor. As to expression, ubiquitous, with highest expression in brain, heart and skeletal muscle (at protein level).

The catalysed reaction is cysteamine + O2 = hypotaurine + H(+). It carries out the reaction N-terminal L-cysteinyl-[protein] + O2 = N-terminal S-hydroxy-S-oxy-L-cysteinyl-[protein] + H(+). In terms of biological role, plays a vital role in regulating thiol metabolism and preserving oxygen homeostasis by oxidizing the sulfur of cysteamine and N-terminal cysteine-containing proteins to their corresponding sulfinic acids using O2 as a cosubstrate. Catalyzes the oxidation of cysteamine (2-aminoethanethiol) to hypotaurine. Catalyzes the oxidation of the regulator of G-protein signaling 5 (RGS5). Also oxidizes proteins RGS4 and interleukin-32 (IL32). The sequence is that of 2-aminoethanethiol dioxygenase (Ado) from Mus musculus (Mouse).